The following is a 128-amino-acid chain: Fluoride-specific ion channel FluC (128 aa).

The next 4 helical transmembrane spans lie at isoleucine 5–alanine 25, leucine 35–phenylalanine 55, leucine 67–valine 87, and phenylalanine 96–leucine 116. Residues glycine 75 and threonine 78 each coordinate Na(+).

Belongs to the fluoride channel Fluc/FEX (TC 1.A.43) family.

Its subcellular location is the cell inner membrane. It carries out the reaction fluoride(in) = fluoride(out). With respect to regulation, na(+) is not transported, but it plays an essential structural role and its presence is essential for fluoride channel function. Fluoride-specific ion channel. Important for reducing fluoride concentration in the cell, thus reducing its toxicity. This chain is Fluoride-specific ion channel FluC, found in Burkholderia lata (strain ATCC 17760 / DSM 23089 / LMG 22485 / NCIMB 9086 / R18194 / 383).